The sequence spans 395 residues: Bifunctional fatty acid conjugase/Delta(12)-oleate desaturase (395 aa).

2 helical membrane-spanning segments follow: residues 73 to 93 (FALA…LPKP) and 97 to 117 (MAWP…WVIA). Positions 118-122 (HECGH) match the Histidine box-1 motif. The chain crosses the membrane as a helical span at residues 130–150 (WVNDAVGFFLHTSLLVPYFPF). The Histidine box-2 signature appears at 154 to 158 (HRRHH). The next 3 helical transmembrane spans lie at 192–212 (VLTL…FNAS), 236–256 (FWVH…YRLA), and 264–284 (LLSI…LITF). Residues 328 to 332 (HVIHH) carry the Histidine box-3 motif.

It belongs to the fatty acid desaturase type 1 family.

Its subcellular location is the membrane. The catalysed reaction is a (9Z,12Z)-octadecadienoyl-containing glycerolipid + 2 Fe(II)-[cytochrome b5] + O2 + 2 H(+) = a (9Z,11E,13Z)-octadeca-9,11,13-trienoyl-containing glycerolipid + 2 Fe(III)-[cytochrome b5] + 2 H2O. It participates in lipid metabolism; polyunsaturated fatty acid biosynthesis. Converts a single cis double bond at position 12 of linoleate incorporated into phosphatidylcholine into conjugated 11-trans and 13-cis double bonds. Produces punicic acid (18:3(9Z,11E,13Z)) from linoleic acid and conjugated octadecatetraenoic fatty acid from gamma-linolenic acid. No activity with cis- and trans-vaccenic acid, alpha-linolenic acid or homo-gamma-linolenic acid. 16:2(9Z,12Z), 18:3(9Z,12Z,15Z) and 18:2(9Z,12Z) are substrates for the conjugase to form trans-Delta(11) and cis-Delta(13) double bonds. No activity on the cis-Delta(9) double bonds of oleic and palmitoleic acids. The chain is Bifunctional fatty acid conjugase/Delta(12)-oleate desaturase from Punica granatum (Pomegranate).